Reading from the N-terminus, the 548-residue chain is Sesquiterpene synthase 12 (548 aa).

Residues D299, D303, D444, and E452 each coordinate Mg(2+). A DDXXD motif motif is present at residues 299 to 303 (DDTFD).

Belongs to the terpene synthase family. Tpsa subfamily. Mg(2+) serves as cofactor. The cofactor is Mn(2+). Mostly expressed in leaves, to a lower extent in stems, trichomes, flowers and roots and, at low levels, in fruits.

The catalysed reaction is (2E,6E)-farnesyl diphosphate = alpha-humulene + diphosphate. It carries out the reaction (2E,6E)-farnesyl diphosphate = (-)-(E)-beta-caryophyllene + diphosphate. The enzyme catalyses (2Z,6Z)-farnesyl diphosphate = beta-bisabolene + diphosphate. It catalyses the reaction (2E)-geranyl diphosphate = terpinolene + diphosphate. The catalysed reaction is (2E)-geranyl diphosphate = limonene + diphosphate. It carries out the reaction (2E)-geranyl diphosphate = beta-myrcene + diphosphate. The enzyme catalyses (2E)-geranyl diphosphate = (E)-beta-ocimene + diphosphate. It catalyses the reaction (2Z,6Z)-farnesyl diphosphate = gamma-curcumene + diphosphate. The catalysed reaction is (2Z,6Z)-farnesyl diphosphate = (Z)-gamma-bisabolene + diphosphate. It functions in the pathway secondary metabolite biosynthesis; terpenoid biosynthesis. In terms of biological role, sesquiterpene synthase involved in the biosynthesis of volatile compounds. Mediates the conversion of (2E,6E)-farnesyl diphosphate (FPP) into (1E,4E,8E)-alpha-humulene and (-)-(E)-beta-caryophyllene, and of (2Z,6Z)-farnesyl diphosphate ((ZZ)-FPP) into beta-bisabolene, gamma-curcumene and (Z)-gamma-bisabolene. Can act with a low efficiency as a monoterpene synthase with geranyl diphosphate (GPP) as substrate, thus producing beta-myrcene, (E)-beta-ocimene, limonene and terpinolene. The polypeptide is Sesquiterpene synthase 12 (Solanum lycopersicum (Tomato)).